Consider the following 78-residue polypeptide: Small ribosomal subunit protein uS15c (78 aa).

This sequence belongs to the universal ribosomal protein uS15 family. In terms of assembly, part of the 30S ribosomal subunit.

It is found in the plastid. The protein localises to the chloroplast. The chain is Small ribosomal subunit protein uS15c (rps15-A) from Saccharum officinarum (Sugarcane).